The sequence spans 235 residues: Phosphoribosylaminoimidazole-succinocarboxamide synthase (235 aa).

It belongs to the SAICAR synthetase family.

The catalysed reaction is 5-amino-1-(5-phospho-D-ribosyl)imidazole-4-carboxylate + L-aspartate + ATP = (2S)-2-[5-amino-1-(5-phospho-beta-D-ribosyl)imidazole-4-carboxamido]succinate + ADP + phosphate + 2 H(+). Its pathway is purine metabolism; IMP biosynthesis via de novo pathway; 5-amino-1-(5-phospho-D-ribosyl)imidazole-4-carboxamide from 5-amino-1-(5-phospho-D-ribosyl)imidazole-4-carboxylate: step 1/2. This is Phosphoribosylaminoimidazole-succinocarboxamide synthase from Streptococcus pneumoniae serotype 2 (strain D39 / NCTC 7466).